The primary structure comprises 344 residues: MVRPRHQPGGLCLLLLLLCQFMEDRSAQAGNCWLRQAKNGRCQVLYKTELSKEECCSTGRLSTSWTEEDVNDNTLFKWMIFNGGAPNCIPCKETCDNVDCGPGKKCRMNKKNKPRCVCAPDCSNITWKGPVCGLDGKTYRNECALLKARCKEQPELEVQYQGKCKKTCRDVNCPGSSTCVVDQTNNAYCVTCNRICPEPTSSEQYLCGNDGVTYSSACHLRKATCLLGRSIGLAYEGKCIKAKSCEDIQCTGGKKCLWDFKVGRGRCSLCDELCPDSKSEEPVCASDNATYASECAMKEAACSSGVLLEVKHSGSCNSISEDTEEEEEDEDQDYSFPISSILEW.

An N-terminal signal peptide occupies residues Met1–Ala29. Residues Gly30–Gly103 form the TB domain. Cystine bridges form between Cys32–Cys55, Cys42–Cys88, Cys56–Cys91, Cys95–Cys106, Cys100–Cys116, Cys118–Cys150, Cys122–Cys143, Cys132–Cys164, Cys168–Cys179, Cys173–Cys189, Cys192–Cys225, Cys196–Cys218, Cys207–Cys239, Cys245–Cys256, Cys250–Cys267, Cys270–Cys302, Cys274–Cys295, and Cys284–Cys316. The region spanning Thr94–Val117 is the Follistatin-like 1 domain. One can recognise a Kazal-like 1 domain in the interval Asn112–Lys166. Asn124 is a glycosylation site (N-linked (GlcNAc...) asparagine). The Follistatin-like 2 domain occupies Thr167 to Val190. The Kazal-like 2 domain maps to Asn186 to Lys241. Residues Ser244–Ser268 enclose the Follistatin-like 3 domain. One can recognise a Kazal-like 3 domain in the interval Arg264–Ser318. Asn288 is a glycosylation site (N-linked (GlcNAc...) asparagine). The segment at Gly314 to Trp344 is disordered. The segment covering Glu321–Asp333 has biased composition (acidic residues).

In terms of assembly, interacts with GDF11. Interacts with activin A/INHBA. Interacts with myostatin/MSTN.

It localises to the secreted. The protein localises to the nucleus. Its subcellular location is the nucleolus. Its function is as follows. Multifunctional regulatory protein whose primary function is to antagonize members of the transforming growth factor beta (TGF-beta) superfamily including activin, myostatin, GDF11 or bone morphogenetic proteins (BMPs). Mechanistically, binds to these ligands in the extracellular space, blocking their type II receptor-binding site to inhibit downstream signaling. Plays an essential role in muscle fiber formation and growth both by preventing the repressive effects of myostatin and through SMAD3/AKT/mTOR signaling independently of myostatin. Also promotes neural differentiation by antagonizing the action BMP4. Acts as a specific inhibitor of the biosynthesis and secretion of pituitary follicle stimulating hormone (FSH) by sequestering activin A/INHBA. On the other hand, translocates into the nucleus where it down-regulates rRNA synthesis and ribosome biogenesis to maintain cellular energy homeostasis by binding to rDNA. The protein is Follistatin of Equus caballus (Horse).